Here is a 185-residue protein sequence, read N- to C-terminus: Large ribosomal subunit protein bL25 (185 aa).

It belongs to the bacterial ribosomal protein bL25 family. CTC subfamily. In terms of assembly, part of the 50S ribosomal subunit; part of the 5S rRNA/L5/L18/L25 subcomplex. Contacts the 5S rRNA. Binds to the 5S rRNA independently of L5 and L18.

In terms of biological role, this is one of the proteins that binds to the 5S RNA in the ribosome where it forms part of the central protuberance. The chain is Large ribosomal subunit protein bL25 from Chlamydia abortus (strain DSM 27085 / S26/3) (Chlamydophila abortus).